Reading from the N-terminus, the 626-residue chain is Glutamine--fructose-6-phosphate aminotransferase [isomerizing] (626 aa).

The Nucleophile; for GATase activity role is filled by Cys2. In terms of domain architecture, Glutamine amidotransferase type-2 spans 2 to 222 (CGIVGYIGPQ…NGELARLTPT (221 aa)). SIS domains lie at 293–441 (LPPS…QRQS) and 471–616 (YIEA…VDQP). Catalysis depends on Lys621, which acts as the For Fru-6P isomerization activity.

Homodimer.

It is found in the cytoplasm. The enzyme catalyses D-fructose 6-phosphate + L-glutamine = D-glucosamine 6-phosphate + L-glutamate. Functionally, catalyzes the first step in hexosamine metabolism, converting fructose-6P into glucosamine-6P using glutamine as a nitrogen source. The protein is Glutamine--fructose-6-phosphate aminotransferase [isomerizing] of Thermosynechococcus vestitus (strain NIES-2133 / IAM M-273 / BP-1).